Consider the following 299-residue polypeptide: MGAQLRVYRQKIKSAHRTKKITRAMELISASRIQKEQARVAASSPYARAITRAVSAVATYSNVGHVLTTEPEKIERAVIVIFSSDRGLAGAFNSNVLKESEKLAELLRSQGKEVVYFLIGRKAQGYFSFRRRAFERVWTGNTDAPEFEQAKEVADAILESFLRDSADGGVDEIHVIYNRFVSMLTQEPQVVRLLPMEVVEGVEEPDRTQVLPLYEFEPDVNTVLDSLLPVYIESRIFNAMLQSAASKHAATQKAMKAASDNADKLITDYTRLANNARQAEITQQISEIVGGADALSSAN.

It belongs to the ATPase gamma chain family. As to quaternary structure, F-type ATPases have 2 components, CF(1) - the catalytic core - and CF(0) - the membrane proton channel. CF(1) has five subunits: alpha(3), beta(3), gamma(1), delta(1), epsilon(1). CF(0) has three main subunits: a, b and c.

It is found in the cell membrane. Functionally, produces ATP from ADP in the presence of a proton gradient across the membrane. The gamma chain is believed to be important in regulating ATPase activity and the flow of protons through the CF(0) complex. The sequence is that of ATP synthase gamma chain from Leifsonia xyli subsp. xyli (strain CTCB07).